The chain runs to 317 residues: Hydroxyacyl-CoA dehydrogenase ChsB1 (317 aa).

Residues Leu-32, Asp-51, Asp-82, Ile-83, Asn-108, Ser-168, Tyr-181, Lys-185, and Thr-215 each contribute to the NAD(+) site. Residues Ser-168, Tyr-181, and Lys-185 contribute to the active site.

The protein belongs to the short-chain dehydrogenases/reductases (SDR) family. Homodimer, with 1 active site on each face.

The enzyme catalyses (22S)-hydroxy-3-oxo-chol-4-ene-24-oyl-CoA + NAD(+) = 3,22-dioxochol-4-en-24-oyl-CoA + NADH + H(+). Its pathway is steroid metabolism; cholesterol degradation. A reversible dehydrogenase involved in cholesterol side-chain degradation. Catalyzes the oxidation of hydroxyl-cholesterol-CoA ester metabolic intermediate (22S)-HOCO-CoA (3-oxo-chol-4-ene-(22S)-hydroxy-24-oyl-CoA), the product of ChsH3, has no activity on (22R)-HOCO-CoA (the product of EchA19). Also acts on (3R)-hydroxyoctanoyl-CoA and 17-beta-hydroxyandrost-4-en-3-one, but not on 7-alpha-hydroxyandrost-4-en-3-one, uses NAD(+) but not NADP(+). This chain is Hydroxyacyl-CoA dehydrogenase ChsB1, found in Mycobacterium tuberculosis (strain ATCC 25618 / H37Rv).